The following is a 665-amino-acid chain: Probable protein transport Sec1a (665 aa).

Positions 543-594 (PSPSFRGIPSASTQTSPAHQPAQSMRSRRTGGTWARPRDSDDGYSSDSVLKH) are disordered. Composition is skewed to polar residues over residues 552–567 (SAST…AQSM) and 585–594 (GYSSDSVLKH).

It belongs to the STXBP/unc-18/SEC1 family.

Functionally, involved in the vesicle trafficking. Binds syntaxins. The protein is Probable protein transport Sec1a of Oryza sativa subsp. japonica (Rice).